The chain runs to 193 residues: Probable GTP-binding protein EngB (193 aa).

Residues glycine 22–alanine 193 form the EngB-type G domain. GTP-binding positions include glycine 30–serine 37, glycine 57–glycine 61, aspartate 75–glycine 78, threonine 142–aspartate 145, and phenylalanine 173–serine 175. Residues serine 37 and threonine 59 each coordinate Mg(2+).

The protein belongs to the TRAFAC class TrmE-Era-EngA-EngB-Septin-like GTPase superfamily. EngB GTPase family. The cofactor is Mg(2+).

Necessary for normal cell division and for the maintenance of normal septation. This chain is Probable GTP-binding protein EngB, found in Desulfotalea psychrophila (strain LSv54 / DSM 12343).